A 113-amino-acid chain; its full sequence is Small ribosomal subunit protein bS6 (113 aa).

It belongs to the bacterial ribosomal protein bS6 family.

In terms of biological role, binds together with bS18 to 16S ribosomal RNA. This chain is Small ribosomal subunit protein bS6, found in Flavobacterium johnsoniae (strain ATCC 17061 / DSM 2064 / JCM 8514 / BCRC 14874 / CCUG 350202 / NBRC 14942 / NCIMB 11054 / UW101) (Cytophaga johnsonae).